Consider the following 227-residue polypeptide: N-acetyltransferase family 8 member 7 (227 aa).

2 helical membrane passes run 36–56 (MLLL…LFLA) and 58–78 (GSWL…WFLA). In terms of domain architecture, N-acetyltransferase spans 61–220 (LLVLLSILTL…PMINLKYSLT (160 aa)).

It belongs to the camello family.

The protein localises to the membrane. The catalysed reaction is L-lysyl-[protein] + acetyl-CoA = N(6)-acetyl-L-lysyl-[protein] + CoA + H(+). Functionally, has histone acetyltransferase activity in vitro, with specificity for histone H4. The protein is N-acetyltransferase family 8 member 7 of Mus musculus (Mouse).